A 270-amino-acid polypeptide reads, in one-letter code: uncharacterized protein (270 aa).

Residues 1–22 form the signal peptide; sequence MEYIKKIALYMSVLLLIIFIGG. Cysteine 23 is lipidated: N-palmitoyl cysteine. Cysteine 23 carries S-diacylglycerol cysteine lipidation.

It belongs to the staphylococcal tandem lipoprotein family.

Its subcellular location is the cell membrane. This is an uncharacterized protein from Staphylococcus aureus (strain N315).